We begin with the raw amino-acid sequence, 299 residues long: Probable lipid kinase YegS-like (299 aa).

Residues 2 to 133 (EKNPITLLIL…IDIAKVNDGH (132 aa)) form the DAGKc domain. ATP-binding positions include threonine 40, 66–72 (GDGTVNE), and threonine 95. Positions 215, 218, and 220 each coordinate Mg(2+). The active-site Proton acceptor is glutamate 271.

Belongs to the diacylglycerol/lipid kinase family. YegS lipid kinase subfamily. Mg(2+) is required as a cofactor. Ca(2+) serves as cofactor.

The protein resides in the cytoplasm. Probably phosphorylates lipids; the in vivo substrate is unknown. The protein is Probable lipid kinase YegS-like of Pectobacterium atrosepticum (strain SCRI 1043 / ATCC BAA-672) (Erwinia carotovora subsp. atroseptica).